Here is a 124-residue protein sequence, read N- to C-terminus: Small polypeptide ROTUNDIFOLIA LIKE 3 (124 aa).

The tract at residues 1–23 is disordered; that stretch reads MEDERWKLSSSKGRSKSGRSCSS. N-linked (GlcNAc...) asparagine glycosylation is found at Asn-35 and Asn-38. A helical membrane pass occupies residues 59–75; it reads AWSAAGAGGGGASSSSS. Residues 60 to 95 are disordered; it reads WSAAGAGGGGASSSSSSQHQHQQQQQQSNNSQRLSK. The segment covering 71–91 has biased composition (low complexity); it reads SSSSSSQHQHQQQQQQSNNSQ. A glycan (N-linked (GlcNAc...) asparagine) is linked at Asn-88. Positions 92–124 are required for DVL/RTFL small polypeptide activity; that stretch reads RLSKKCVEAVKEHRARFYIVRRCVSMLVCWRDY.

Belongs to the DVL/RTFL small polypeptides family.

It is found in the cell membrane. Functionally, small polypeptide acting as a regulatory molecule which coordinates cellular responses required for differentiation, growth and development, probably by restricting polar cell proliferation in lateral organs (e.g. leaves and petioles). The chain is Small polypeptide ROTUNDIFOLIA LIKE 3 from Oryza sativa subsp. japonica (Rice).